We begin with the raw amino-acid sequence, 242 residues long: E3 ubiquitin-protein ligase AIRP2 (242 aa).

The RING-type zinc finger occupies 146-184 (CGICLEIRNKVVLPTCNHSMCINCYRNWRARSQSCPFCR).

Interacts with ATP1/SDIRIP1. Expressed in germinating seeds, flower organs and siliques.

The protein localises to the cytoplasm. It localises to the cytosol. It carries out the reaction S-ubiquitinyl-[E2 ubiquitin-conjugating enzyme]-L-cysteine + [acceptor protein]-L-lysine = [E2 ubiquitin-conjugating enzyme]-L-cysteine + N(6)-ubiquitinyl-[acceptor protein]-L-lysine.. Possesses E3 ubiquitin-protein ligase activity in vitro when associated with the E2 enzyme UBC8 in vitro. Plays combinatory roles with AIRP1 in the positive regulation of the abscisic acid-mediated drought stress response. Plays a positive role in abscisic acid- and high salinity-regulated seed germination through the ubiquitin-proteasome-dependent down-regulation of ATP1/SDIRIP1. The polypeptide is E3 ubiquitin-protein ligase AIRP2 (Arabidopsis thaliana (Mouse-ear cress)).